Here is a 167-residue protein sequence, read N- to C-terminus: UPF0114 protein in repA1-repA2 intergenic region (167 aa).

3 consecutive transmembrane segments (helical) span residues 15–35, 53–73, and 136–156; these read LMFPVYVGLSFGFILLTLKFF, LVLAVLSLIDIALVGGLLVMV, and IMLCVIIRLTFVLSAFGMAYI.

Belongs to the UPF0114 family.

Its subcellular location is the cell membrane. This is UPF0114 protein in repA1-repA2 intergenic region from Buchnera aphidicola subsp. Schizaphis graminum (strain Sg).